Here is a 414-residue protein sequence, read N- to C-terminus: Histidine--tRNA ligase (414 aa).

The protein belongs to the class-II aminoacyl-tRNA synthetase family. In terms of assembly, homodimer.

It is found in the cytoplasm. It catalyses the reaction tRNA(His) + L-histidine + ATP = L-histidyl-tRNA(His) + AMP + diphosphate + H(+). This is Histidine--tRNA ligase from Anaeromyxobacter dehalogenans (strain 2CP-1 / ATCC BAA-258).